A 167-amino-acid polypeptide reads, in one-letter code: Cell division protein SepF (167 aa).

Positions 25–64 are disordered; that stretch reads EEDVAPVNNSTFQEKKHKKRSAVQRKQKNSDQEGDSVVPL. Residues 39 to 51 are compositionally biased toward basic residues; that stretch reads KKHKKRSAVQRKQ.

This sequence belongs to the SepF family. As to quaternary structure, homodimer. Interacts with FtsZ.

The protein resides in the cytoplasm. In terms of biological role, cell division protein that is part of the divisome complex and is recruited early to the Z-ring. Probably stimulates Z-ring formation, perhaps through the cross-linking of FtsZ protofilaments. Its function overlaps with FtsA. This chain is Cell division protein SepF, found in Natranaerobius thermophilus (strain ATCC BAA-1301 / DSM 18059 / JW/NM-WN-LF).